The chain runs to 335 residues: ATP-dependent 6-phosphofructokinase (335 aa).

G11 serves as a coordination point for ATP. Residue 21–25 participates in ADP binding; the sequence is RAVVR. Residues 72–73 and 102–105 each bind ATP; these read RY and GDGS. D103 contacts Mg(2+). 125–127 lines the substrate pocket; that stretch reads TID. The Proton acceptor role is filled by D127. ADP is bound at residue R154. Substrate contacts are provided by residues R162 and 169–171; that span reads MGR. ADP is bound by residues 185-187 and 213-215; these read GAD and KKH. Substrate contacts are provided by residues E222, R244, and 250-253; that span reads HIQR.

This sequence belongs to the phosphofructokinase type A (PFKA) family. ATP-dependent PFK group I subfamily. Prokaryotic clade 'B1' sub-subfamily. Homotetramer. Requires Mg(2+) as cofactor.

It is found in the cytoplasm. The enzyme catalyses beta-D-fructose 6-phosphate + ATP = beta-D-fructose 1,6-bisphosphate + ADP + H(+). It participates in carbohydrate degradation; glycolysis; D-glyceraldehyde 3-phosphate and glycerone phosphate from D-glucose: step 3/4. Its activity is regulated as follows. Allosterically activated by ADP and other diphosphonucleosides, and allosterically inhibited by phosphoenolpyruvate. Its function is as follows. Catalyzes the phosphorylation of D-fructose 6-phosphate to fructose 1,6-bisphosphate by ATP, the first committing step of glycolysis. This Streptococcus pneumoniae (strain CGSP14) protein is ATP-dependent 6-phosphofructokinase.